Reading from the N-terminus, the 152-residue chain is Deoxyuridine 5'-triphosphate nucleotidohydrolase (152 aa).

Substrate contacts are provided by residues 72–74 (RSG), Asn85, and 89–91 (TVD).

The protein belongs to the dUTPase family. Mg(2+) is required as a cofactor.

It catalyses the reaction dUTP + H2O = dUMP + diphosphate + H(+). It functions in the pathway pyrimidine metabolism; dUMP biosynthesis; dUMP from dCTP (dUTP route): step 2/2. In terms of biological role, this enzyme is involved in nucleotide metabolism: it produces dUMP, the immediate precursor of thymidine nucleotides and it decreases the intracellular concentration of dUTP so that uracil cannot be incorporated into DNA. The polypeptide is Deoxyuridine 5'-triphosphate nucleotidohydrolase (Nitrobacter winogradskyi (strain ATCC 25391 / DSM 10237 / CIP 104748 / NCIMB 11846 / Nb-255)).